Here is a 396-residue protein sequence, read N- to C-terminus: MKTLVFNPFSGAAGDMILACALDLGADKQAVKELVEASAPVSMDIREVVKEGIKALDVRIKVPENEHVRTYPEIVDLVKAAKLPLQLEASTLSIFLKMAEAEAAVHGQPDLEMLHFHEVGQSDALADVIGSSAALHSLNCDSVYCTPINVGSGTIECAHGTLPVPAPATLEILRKGKLYFRGGSVNKELLTPTGAAILSHFAKPVETFPQGKAIAIGYGAGNADLPGPNVLQGVLLEPDSHLISDIIEVLETNADDVSGEVLGNLFEELLSMGARDVAIMPATMKKGRPAHIIKVIAKPEDSAKLARKIIVETGSLGVRVMPARHRLMAARNIERIKIELEGQEFETAVKVARDSEGVLLNISAEFEDCKKIAKASGIPVREIMRRTEEVARKLFS.

Belongs to the LarC family.

The sequence is that of Putative nickel insertion protein from Methanosarcina acetivorans (strain ATCC 35395 / DSM 2834 / JCM 12185 / C2A).